Reading from the N-terminus, the 362-residue chain is Cobalt-precorrin-5B C(1)-methyltransferase (362 aa).

This sequence belongs to the CbiD family.

It catalyses the reaction Co-precorrin-5B + S-adenosyl-L-methionine = Co-precorrin-6A + S-adenosyl-L-homocysteine. It functions in the pathway cofactor biosynthesis; adenosylcobalamin biosynthesis; cob(II)yrinate a,c-diamide from sirohydrochlorin (anaerobic route): step 6/10. Its function is as follows. Catalyzes the methylation of C-1 in cobalt-precorrin-5B to form cobalt-precorrin-6A. This Burkholderia thailandensis (strain ATCC 700388 / DSM 13276 / CCUG 48851 / CIP 106301 / E264) protein is Cobalt-precorrin-5B C(1)-methyltransferase.